A 584-amino-acid polypeptide reads, in one-letter code: ATP-dependent lipid A-core flippase 2 (584 aa).

6 helical membrane passes run 32-52, 68-88, 146-166, 167-187, 254-274, and 280-300; these read IFIA…MIYF, TLQL…IASF, SAVV…SMMV, YNSW…ALII, AISN…VLLL, and VLNQ…GSLL. Residues 33–315 enclose the ABC transmembrane type-1 domain; sequence FIALAGLCLF…LSNINQQLQK (283 aa). The region spanning 347-583 is the ABC transporter domain; it reads IRFNNFSFTY…AGYYQSLYQS (237 aa). Residue 381–388 coordinates ATP; it reads GESGSGKS.

The protein belongs to the ABC transporter superfamily. Lipid exporter (TC 3.A.1.106) family. As to quaternary structure, homodimer.

It is found in the cell inner membrane. The enzyme catalyses ATP + H2O + lipid A-core oligosaccharideSide 1 = ADP + phosphate + lipid A-core oligosaccharideSide 2.. Its function is as follows. Involved in lipopolysaccharide (LPS) biosynthesis. Translocates lipid A-core from the inner to the outer leaflet of the inner membrane. Transmembrane domains (TMD) form a pore in the inner membrane and the ATP-binding domain (NBD) is responsible for energy generation. This Colwellia psychrerythraea (strain 34H / ATCC BAA-681) (Vibrio psychroerythus) protein is ATP-dependent lipid A-core flippase 2.